The primary structure comprises 95 residues: Large ribosomal subunit protein uL23 (95 aa).

This sequence belongs to the universal ribosomal protein uL23 family. In terms of assembly, part of the 50S ribosomal subunit. Contacts protein L29, and trigger factor when it is bound to the ribosome.

In terms of biological role, one of the early assembly proteins it binds 23S rRNA. One of the proteins that surrounds the polypeptide exit tunnel on the outside of the ribosome. Forms the main docking site for trigger factor binding to the ribosome. This Fusobacterium nucleatum subsp. nucleatum (strain ATCC 25586 / DSM 15643 / BCRC 10681 / CIP 101130 / JCM 8532 / KCTC 2640 / LMG 13131 / VPI 4355) protein is Large ribosomal subunit protein uL23.